Here is a 249-residue protein sequence, read N- to C-terminus: Triosephosphate isomerase (249 aa).

A substrate-binding site is contributed by 12–14 (NWK). His-96 acts as the Electrophile in catalysis. Glu-166 acts as the Proton acceptor in catalysis. Substrate is bound by residues Gly-172, Ser-211, and 232-233 (GG).

This sequence belongs to the triosephosphate isomerase family. In terms of assembly, homodimer.

The protein localises to the cytoplasm. It carries out the reaction D-glyceraldehyde 3-phosphate = dihydroxyacetone phosphate. The protein operates within carbohydrate biosynthesis; gluconeogenesis. Its pathway is carbohydrate degradation; glycolysis; D-glyceraldehyde 3-phosphate from glycerone phosphate: step 1/1. Functionally, involved in the gluconeogenesis. Catalyzes stereospecifically the conversion of dihydroxyacetone phosphate (DHAP) to D-glyceraldehyde-3-phosphate (G3P). The sequence is that of Triosephosphate isomerase from Xanthobacter flavus.